Here is a 431-residue protein sequence, read N- to C-terminus: Adenylosuccinate synthetase (431 aa).

GTP is bound by residues 13-19 and 41-43; these read GDEGKGK and GHT. D14 (proton acceptor) is an active-site residue. Residues D14 and G41 each contribute to the Mg(2+) site. Residues 14-17, 39-42, T130, R144, Q225, T240, and R304 each bind IMP; these read DEGK and NAGH. The active-site Proton donor is H42. Residue 300-306 coordinates substrate; sequence ATTHRPR. Residues R306, 332 to 334, and 414 to 416 each bind GTP; these read KLD and STG.

This sequence belongs to the adenylosuccinate synthetase family. As to quaternary structure, homodimer. It depends on Mg(2+) as a cofactor.

The protein resides in the cytoplasm. It catalyses the reaction IMP + L-aspartate + GTP = N(6)-(1,2-dicarboxyethyl)-AMP + GDP + phosphate + 2 H(+). Its pathway is purine metabolism; AMP biosynthesis via de novo pathway; AMP from IMP: step 1/2. Its function is as follows. Plays an important role in the de novo pathway of purine nucleotide biosynthesis. Catalyzes the first committed step in the biosynthesis of AMP from IMP. This Nitrosococcus oceani (strain ATCC 19707 / BCRC 17464 / JCM 30415 / NCIMB 11848 / C-107) protein is Adenylosuccinate synthetase.